The following is a 349-amino-acid chain: PhoH-like protein (349 aa).

ATP is bound at residue 147–154 (GPAGTGKT).

Belongs to the PhoH family.

Its subcellular location is the cytoplasm. The sequence is that of PhoH-like protein from Mycobacterium leprae (strain TN).